Consider the following 76-residue polypeptide: ATP synthase subunit c (76 aa).

2 helical membrane passes run 8–28 and 55–75; these read LLAA…GVGI and VAFA…LIFV.

Belongs to the ATPase C chain family. As to quaternary structure, F-type ATPases have 2 components, F(1) - the catalytic core - and F(0) - the membrane proton channel. F(1) has five subunits: alpha(3), beta(3), gamma(1), delta(1), epsilon(1). F(0) has three main subunits: a(1), b(2) and c(10-14). The alpha and beta chains form an alternating ring which encloses part of the gamma chain. F(1) is attached to F(0) by a central stalk formed by the gamma and epsilon chains, while a peripheral stalk is formed by the delta and b chains.

It is found in the cell membrane. F(1)F(0) ATP synthase produces ATP from ADP in the presence of a proton or sodium gradient. F-type ATPases consist of two structural domains, F(1) containing the extramembraneous catalytic core and F(0) containing the membrane proton channel, linked together by a central stalk and a peripheral stalk. During catalysis, ATP synthesis in the catalytic domain of F(1) is coupled via a rotary mechanism of the central stalk subunits to proton translocation. Its function is as follows. Key component of the F(0) channel; it plays a direct role in translocation across the membrane. A homomeric c-ring of between 10-14 subunits forms the central stalk rotor element with the F(1) delta and epsilon subunits. The sequence is that of ATP synthase subunit c from Dehalococcoides mccartyi (strain ATCC BAA-2266 / KCTC 15142 / 195) (Dehalococcoides ethenogenes (strain 195)).